A 351-amino-acid polypeptide reads, in one-letter code: Nicotinate-nucleotide--dimethylbenzimidazole phosphoribosyltransferase (351 aa).

Residue Glu318 is the Proton acceptor of the active site.

It belongs to the CobT family.

The catalysed reaction is 5,6-dimethylbenzimidazole + nicotinate beta-D-ribonucleotide = alpha-ribazole 5'-phosphate + nicotinate + H(+). It participates in nucleoside biosynthesis; alpha-ribazole biosynthesis; alpha-ribazole from 5,6-dimethylbenzimidazole: step 1/2. Its function is as follows. Catalyzes the synthesis of alpha-ribazole-5'-phosphate from nicotinate mononucleotide (NAMN) and 5,6-dimethylbenzimidazole (DMB). In Chloroflexus aurantiacus (strain ATCC 29366 / DSM 635 / J-10-fl), this protein is Nicotinate-nucleotide--dimethylbenzimidazole phosphoribosyltransferase.